Consider the following 414-residue polypeptide: Probable sugar phosphate/phosphate translocator At1g06470 (414 aa).

Transmembrane regions (helical) follow at residues 72–92 (VLKT…LTLY), 101–121 (LGKF…QAVL), 172–192 (TFAT…AFAF), 197–217 (PSLK…LTVA), 224–244 (FWGF…WCMT), 259–279 (FIFM…LSLL), 303–323 (FLML…YVLV), 328–348 (AVTV…VAVF), and 354–374 (FTWL…LFNW). Residues 106 to 216 (APLLMNTIHF…VISAGVLLTV (111 aa)) form the EamA domain.

Belongs to the TPT transporter family. TPT (TC 2.A.7.9) subfamily.

The protein resides in the membrane. The chain is Probable sugar phosphate/phosphate translocator At1g06470 from Arabidopsis thaliana (Mouse-ear cress).